The sequence spans 116 residues: Large ribosomal subunit protein uL22 (116 aa).

It belongs to the universal ribosomal protein uL22 family. As to quaternary structure, part of the 50S ribosomal subunit.

Its function is as follows. This protein binds specifically to 23S rRNA; its binding is stimulated by other ribosomal proteins, e.g. L4, L17, and L20. It is important during the early stages of 50S assembly. It makes multiple contacts with different domains of the 23S rRNA in the assembled 50S subunit and ribosome. In terms of biological role, the globular domain of the protein is located near the polypeptide exit tunnel on the outside of the subunit, while an extended beta-hairpin is found that lines the wall of the exit tunnel in the center of the 70S ribosome. The polypeptide is Large ribosomal subunit protein uL22 (Leptospira biflexa serovar Patoc (strain Patoc 1 / Ames)).